A 113-amino-acid polypeptide reads, in one-letter code: Single-stranded DNA-binding protein B (113 aa).

The SSB domain occupies 1–104 (MFNQVMLVGR…VLADTVRFMD (104 aa)). Tyrosine 82 is subject to Phosphotyrosine.

In terms of assembly, homotetramer. In terms of processing, phosphorylated by YwqD, which increases ssDNA affinity; dephosphorylated by YwqE.

It is found in the cytoplasm. Not essential for replication of the chromosome, but is required for optimal competence. Binds ssDNA, binding is facilitated by DprA, acts as an accessory factor for homologous DNA strand exchange. The polypeptide is Single-stranded DNA-binding protein B (ssbB) (Bacillus subtilis (strain 168)).